Consider the following 657-residue polypeptide: Glycogen debranching enzyme (657 aa).

The Nucleophile role is filled by D336. E371 serves as the catalytic Proton donor. The segment at 460 to 479 is disordered; sequence ANGEENRDGTNNNYSNNHGK.

Belongs to the glycosyl hydrolase 13 family.

The enzyme catalyses Hydrolysis of (1-&gt;6)-alpha-D-glucosidic linkages to branches with degrees of polymerization of three or four glucose residues in limit dextrin.. It participates in glycan degradation; glycogen degradation. In terms of biological role, removes maltotriose and maltotetraose chains that are attached by 1,6-alpha-linkage to the limit dextrin main chain, generating a debranched limit dextrin. This chain is Glycogen debranching enzyme, found in Escherichia coli O17:K52:H18 (strain UMN026 / ExPEC).